Consider the following 100-residue polypeptide: NADH-quinone oxidoreductase subunit K 2 (100 aa).

Transmembrane regions (helical) follow at residues 4 to 24 (LWWF…GVLL), 28 to 48 (ILVV…NFIA), and 60 to 80 (IFAI…LGIL).

The protein belongs to the complex I subunit 4L family. As to quaternary structure, NDH-1 is composed of 14 different subunits. Subunits NuoA, H, J, K, L, M, N constitute the membrane sector of the complex.

The protein localises to the cell inner membrane. It catalyses the reaction a quinone + NADH + 5 H(+)(in) = a quinol + NAD(+) + 4 H(+)(out). Its function is as follows. NDH-1 shuttles electrons from NADH, via FMN and iron-sulfur (Fe-S) centers, to quinones in the respiratory chain. The immediate electron acceptor for the enzyme in this species is believed to be ubiquinone. Couples the redox reaction to proton translocation (for every two electrons transferred, four hydrogen ions are translocated across the cytoplasmic membrane), and thus conserves the redox energy in a proton gradient. This chain is NADH-quinone oxidoreductase subunit K 2, found in Rhizobium etli (strain CIAT 652).